A 431-amino-acid polypeptide reads, in one-letter code: Enolase (431 aa).

A (2R)-2-phosphoglycerate-binding site is contributed by Q167. The Proton donor role is filled by E209. Residues D246, E289, and D316 each contribute to the Mg(2+) site. (2R)-2-phosphoglycerate-binding residues include K341, R370, S371, and K392. K341 serves as the catalytic Proton acceptor.

The protein belongs to the enolase family. Component of the RNA degradosome, a multiprotein complex involved in RNA processing and mRNA degradation. Mg(2+) serves as cofactor.

It localises to the cytoplasm. The protein resides in the secreted. It is found in the cell surface. It catalyses the reaction (2R)-2-phosphoglycerate = phosphoenolpyruvate + H2O. The protein operates within carbohydrate degradation; glycolysis; pyruvate from D-glyceraldehyde 3-phosphate: step 4/5. Catalyzes the reversible conversion of 2-phosphoglycerate (2-PG) into phosphoenolpyruvate (PEP). It is essential for the degradation of carbohydrates via glycolysis. In Shewanella sp. (strain MR-4), this protein is Enolase.